We begin with the raw amino-acid sequence, 347 residues long: Protein YIPF3 (347 aa).

Residues 1 to 28 (MATQAAPASGVRNGAGPEWGGFEENIQG) form a disordered region. Residue alanine 2 is modified to N-acetylalanine. Topologically, residues 2 to 145 (ATQAAPASGV…PIKMVNFPQK (144 aa)) are cytoplasmic. Residues 146–166 (VAGELYGPLMLVFTLVAILLH) traverse the membrane as a helical segment. Residues 167–184 (GMKTSDTIIREGTLMGTA) lie on the Lumenal side of the membrane. The chain crosses the membrane as a helical span at residues 185–205 (IGTCFGYWLGVSSFIYFLAYL). Residues 206–211 (CNAQIT) lie on the Cytoplasmic side of the membrane. Residues 212 to 234 (MLQMLALLGYGLFGHCIVLFITY) traverse the membrane as a helical segment. Residues 235 to 237 (NIH) are Lumenal-facing. The helical transmembrane segment at 238–260 (LHALFYLFWLLLGGLSTLRMVAV) threads the bilayer. Topologically, residues 261 to 271 (LVSRTVGPTQR) are cytoplasmic. The chain crosses the membrane as a helical span at residues 272-292 (LLLCGTLAALHMLFLLYLHFA). The Lumenal segment spans residues 293–347 (YHKVVEGILDTLEGPNIPPMQRVPRDIPAVLPAAKLPVAVVNATAKAIAVTLQSH). N-linked (GlcNAc...) asparagine glycosylation is present at asparagine 334.

Belongs to the YIP1 family. In terms of assembly, interacts with YIPF4 and YIPF5.

Its subcellular location is the cell membrane. It localises to the golgi apparatus. The protein resides in the cis-Golgi network membrane. The protein localises to the cytoplasm. Functionally, involved in the maintenance of the Golgi structure. May play a role in hematopoiesis. The protein is Protein YIPF3 (Yipf3) of Rattus norvegicus (Rat).